A 210-amino-acid polypeptide reads, in one-letter code: 7-cyano-7-deazaguanine synthase 2 (210 aa).

10–20 (HSGGMDSTTCL) is a binding site for ATP. 4 residues coordinate Zn(2+): C180, C193, C196, and C199.

Belongs to the QueC family. It depends on Zn(2+) as a cofactor.

The catalysed reaction is 7-carboxy-7-deazaguanine + NH4(+) + ATP = 7-cyano-7-deazaguanine + ADP + phosphate + H2O + H(+). It participates in purine metabolism; 7-cyano-7-deazaguanine biosynthesis. In terms of biological role, catalyzes the ATP-dependent conversion of 7-carboxy-7-deazaguanine (CDG) to 7-cyano-7-deazaguanine (preQ(0)). This Rhodopseudomonas palustris (strain HaA2) protein is 7-cyano-7-deazaguanine synthase 2.